A 316-amino-acid chain; its full sequence is 4-hydroxy-3-methylbut-2-enyl diphosphate reductase (316 aa).

Position 12 (Cys12) interacts with [4Fe-4S] cluster. His41 and His74 together coordinate (2E)-4-hydroxy-3-methylbut-2-enyl diphosphate. Residues His41 and His74 each coordinate dimethylallyl diphosphate. 2 residues coordinate isopentenyl diphosphate: His41 and His74. Cys96 contacts [4Fe-4S] cluster. Residue His124 participates in (2E)-4-hydroxy-3-methylbut-2-enyl diphosphate binding. His124 is a binding site for dimethylallyl diphosphate. His124 contributes to the isopentenyl diphosphate binding site. The active-site Proton donor is Glu126. Residue Thr167 coordinates (2E)-4-hydroxy-3-methylbut-2-enyl diphosphate. Cys197 is a binding site for [4Fe-4S] cluster. The (2E)-4-hydroxy-3-methylbut-2-enyl diphosphate site is built by Ser225, Ser226, Asn227, and Ser269. Residues Ser225, Ser226, Asn227, and Ser269 each coordinate dimethylallyl diphosphate. Ser225, Ser226, Asn227, and Ser269 together coordinate isopentenyl diphosphate.

It belongs to the IspH family. Homodimer. [4Fe-4S] cluster is required as a cofactor.

The catalysed reaction is isopentenyl diphosphate + 2 oxidized [2Fe-2S]-[ferredoxin] + H2O = (2E)-4-hydroxy-3-methylbut-2-enyl diphosphate + 2 reduced [2Fe-2S]-[ferredoxin] + 2 H(+). It carries out the reaction dimethylallyl diphosphate + 2 oxidized [2Fe-2S]-[ferredoxin] + H2O = (2E)-4-hydroxy-3-methylbut-2-enyl diphosphate + 2 reduced [2Fe-2S]-[ferredoxin] + 2 H(+). The protein operates within isoprenoid biosynthesis; dimethylallyl diphosphate biosynthesis; dimethylallyl diphosphate from (2E)-4-hydroxy-3-methylbutenyl diphosphate: step 1/1. It participates in isoprenoid biosynthesis; isopentenyl diphosphate biosynthesis via DXP pathway; isopentenyl diphosphate from 1-deoxy-D-xylulose 5-phosphate: step 6/6. Its function is as follows. Catalyzes the conversion of 1-hydroxy-2-methyl-2-(E)-butenyl 4-diphosphate (HMBPP) into a mixture of isopentenyl diphosphate (IPP) and dimethylallyl diphosphate (DMAPP). Acts in the terminal step of the DOXP/MEP pathway for isoprenoid precursor biosynthesis. This Shigella flexneri serotype 5b (strain 8401) protein is 4-hydroxy-3-methylbut-2-enyl diphosphate reductase.